We begin with the raw amino-acid sequence, 148 residues long: Putative HTH-type transcriptional regulator NMA1593 (148 aa).

The HTH rrf2-type domain maps to 2–131 (RLTTKGRFAV…GSVTLQSIIE (130 aa)).

The protein is Putative HTH-type transcriptional regulator NMA1593 of Neisseria meningitidis serogroup A / serotype 4A (strain DSM 15465 / Z2491).